A 358-amino-acid polypeptide reads, in one-letter code: F-box protein At4g35733 (358 aa).

One can recognise an F-box domain in the interval 4–51 (ATVWSDLPGELLDHIANGLFSKVELLRFRSICKTFRSAVDSDKNFLDH).

Part of a SCF (ASK-cullin-F-box) protein ligase complex.

It participates in protein modification; protein ubiquitination. Functionally, component of SCF(ASK-cullin-F-box) E3 ubiquitin ligase complexes, which may mediate the ubiquitination and subsequent proteasomal degradation of target proteins. This chain is F-box protein At4g35733, found in Arabidopsis thaliana (Mouse-ear cress).